We begin with the raw amino-acid sequence, 211 residues long: tRNA (guanine-N(7)-)-methyltransferase (211 aa).

The S-adenosyl-L-methionine site is built by glutamate 44, aspartate 69, aspartate 96, and aspartate 118. Aspartate 118 is an active-site residue. Lysine 122 provides a ligand contact to substrate. An interaction with RNA region spans residues 124–129; the sequence is RHEKRR. Substrate is bound by residues aspartate 154 and 191 to 194; that span reads TEYE.

It belongs to the class I-like SAM-binding methyltransferase superfamily. TrmB family.

The catalysed reaction is guanosine(46) in tRNA + S-adenosyl-L-methionine = N(7)-methylguanosine(46) in tRNA + S-adenosyl-L-homocysteine. It functions in the pathway tRNA modification; N(7)-methylguanine-tRNA biosynthesis. Functionally, catalyzes the formation of N(7)-methylguanine at position 46 (m7G46) in tRNA. The chain is tRNA (guanine-N(7)-)-methyltransferase from Streptococcus equi subsp. zooepidemicus (strain H70).